The following is a 182-amino-acid chain: ATP-dependent protease subunit HslV (182 aa).

T10 is a catalytic residue. Positions 166, 169, and 172 each coordinate Na(+).

Belongs to the peptidase T1B family. HslV subfamily. In terms of assembly, a double ring-shaped homohexamer of HslV is capped on each side by a ring-shaped HslU homohexamer. The assembly of the HslU/HslV complex is dependent on binding of ATP.

The protein localises to the cytoplasm. The catalysed reaction is ATP-dependent cleavage of peptide bonds with broad specificity.. With respect to regulation, allosterically activated by HslU binding. Protease subunit of a proteasome-like degradation complex believed to be a general protein degrading machinery. The sequence is that of ATP-dependent protease subunit HslV from Rickettsia africae (strain ESF-5).